The following is a 513-amino-acid chain: ATP synthase subunit alpha (513 aa).

An ATP-binding site is contributed by 169–176 (GDRQTGKT).

It belongs to the ATPase alpha/beta chains family. As to quaternary structure, F-type ATPases have 2 components, CF(1) - the catalytic core - and CF(0) - the membrane proton channel. CF(1) has five subunits: alpha(3), beta(3), gamma(1), delta(1), epsilon(1). CF(0) has three main subunits: a(1), b(2) and c(9-12). The alpha and beta chains form an alternating ring which encloses part of the gamma chain. CF(1) is attached to CF(0) by a central stalk formed by the gamma and epsilon chains, while a peripheral stalk is formed by the delta and b chains.

The protein localises to the cell inner membrane. It catalyses the reaction ATP + H2O + 4 H(+)(in) = ADP + phosphate + 5 H(+)(out). Functionally, produces ATP from ADP in the presence of a proton gradient across the membrane. The alpha chain is a regulatory subunit. This Yersinia pseudotuberculosis serotype O:1b (strain IP 31758) protein is ATP synthase subunit alpha.